A 402-amino-acid chain; its full sequence is Imidazolonepropionase (402 aa).

His66 and His68 together coordinate Fe(3+). Residues His66 and His68 each contribute to the Zn(2+) site. Residues Arg75, Tyr138, and His171 each coordinate 4-imidazolone-5-propanoate. Tyr138 is an N-formimidoyl-L-glutamate binding site. Position 236 (His236) interacts with Fe(3+). His236 provides a ligand contact to Zn(2+). Residue Gln239 participates in 4-imidazolone-5-propanoate binding. Asp311 lines the Fe(3+) pocket. Asp311 contributes to the Zn(2+) binding site. N-formimidoyl-L-glutamate-binding residues include Asn313 and Gly315. Thr316 serves as a coordination point for 4-imidazolone-5-propanoate.

It belongs to the metallo-dependent hydrolases superfamily. HutI family. The cofactor is Zn(2+). It depends on Fe(3+) as a cofactor.

The protein resides in the cytoplasm. The enzyme catalyses 4-imidazolone-5-propanoate + H2O = N-formimidoyl-L-glutamate. The protein operates within amino-acid degradation; L-histidine degradation into L-glutamate; N-formimidoyl-L-glutamate from L-histidine: step 3/3. Its function is as follows. Catalyzes the hydrolytic cleavage of the carbon-nitrogen bond in imidazolone-5-propanoate to yield N-formimidoyl-L-glutamate. It is the third step in the universal histidine degradation pathway. This chain is Imidazolonepropionase, found in Pseudomonas aeruginosa (strain UCBPP-PA14).